A 321-amino-acid polypeptide reads, in one-letter code: Nacrein-like protein (321 aa).

Residues 1-319 (RGPKNWCKVH…NKNVIVYRNH (319 aa)) enclose the Alpha-carbonic anhydrase domain. Residue His-58 is the Proton acceptor of the active site.

This sequence belongs to the alpha-carbonic anhydrase family. As to expression, component of the organic matrix of calcified shell layers like nacre and prisms.

The protein resides in the secreted. The polypeptide is Nacrein-like protein (Mytilus californianus (California mussel)).